The following is a 126-amino-acid chain: Aspartate 1-decarboxylase (126 aa).

Residue Ser-25 is the Schiff-base intermediate with substrate; via pyruvic acid of the active site. Ser-25 is subject to Pyruvic acid (Ser). Thr-57 provides a ligand contact to substrate. The active-site Proton donor is the Tyr-58. Position 73 to 75 (73 to 75 (GAA)) interacts with substrate.

The protein belongs to the PanD family. Heterooctamer of four alpha and four beta subunits. It depends on pyruvate as a cofactor. Is synthesized initially as an inactive proenzyme, which is activated by self-cleavage at a specific serine bond to produce a beta-subunit with a hydroxyl group at its C-terminus and an alpha-subunit with a pyruvoyl group at its N-terminus.

It is found in the cytoplasm. The catalysed reaction is L-aspartate + H(+) = beta-alanine + CO2. Its pathway is cofactor biosynthesis; (R)-pantothenate biosynthesis; beta-alanine from L-aspartate: step 1/1. Catalyzes the pyruvoyl-dependent decarboxylation of aspartate to produce beta-alanine. The protein is Aspartate 1-decarboxylase of Marinomonas sp. (strain MWYL1).